We begin with the raw amino-acid sequence, 146 residues long: Prolactin-inducible protein homolog (146 aa).

An N-terminal signal peptide occupies residues 1–28; the sequence is MRALQFLLRVSPAFLLLVLCLQLEINKA. 2 disulfide bridges follow: cysteine 65-cysteine 91 and cysteine 89-cysteine 123. Asparagine 105 is a glycosylation site (N-linked (GlcNAc...) asparagine).

It belongs to the PIP family. Monomer. Interacts with AZGP1.

It localises to the secreted. The protein is Prolactin-inducible protein homolog (PIP) of Oryctolagus cuniculus (Rabbit).